A 357-amino-acid polypeptide reads, in one-letter code: ATP-dependent 6-phosphofructokinase 2 (357 aa).

Residues G12, 80–81, and 107–110 each bind ATP; these read KG and GDGS. Position 108 (D108) interacts with Mg(2+). Substrate-binding positions include 131–133, R168, 175–177, E229, R272, and 278–281; these read TID, MGR, and HIQR. The active-site Proton acceptor is the D133.

Belongs to the phosphofructokinase type A (PFKA) family. Mixed-substrate PFK group III subfamily. In terms of assembly, homodimer or homotetramer. Mg(2+) serves as cofactor.

It localises to the cytoplasm. The catalysed reaction is beta-D-fructose 6-phosphate + ATP = beta-D-fructose 1,6-bisphosphate + ADP + H(+). It functions in the pathway carbohydrate degradation; glycolysis; D-glyceraldehyde 3-phosphate and glycerone phosphate from D-glucose: step 3/4. With respect to regulation, subject to allosteric activation by ADP and other diphosphonucleosides, and inhibition by phosphoenolpyruvate. Its function is as follows. Catalyzes the phosphorylation of D-fructose 6-phosphate to fructose 1,6-bisphosphate by ATP, the first committing step of glycolysis. The sequence is that of ATP-dependent 6-phosphofructokinase 2 from Nostoc sp. (strain PCC 7120 / SAG 25.82 / UTEX 2576).